A 255-amino-acid chain; its full sequence is Triosephosphate isomerase (255 aa).

10–12 (NWK) contributes to the substrate binding site. The active-site Electrophile is the H96. The active-site Proton acceptor is E169. Residues G175, S214, and 235–236 (GG) contribute to the substrate site.

The protein belongs to the triosephosphate isomerase family. As to quaternary structure, homodimer.

It localises to the cytoplasm. It carries out the reaction D-glyceraldehyde 3-phosphate = dihydroxyacetone phosphate. Its pathway is carbohydrate biosynthesis; gluconeogenesis. The protein operates within carbohydrate degradation; glycolysis; D-glyceraldehyde 3-phosphate from glycerone phosphate: step 1/1. Its function is as follows. Involved in the gluconeogenesis. Catalyzes stereospecifically the conversion of dihydroxyacetone phosphate (DHAP) to D-glyceraldehyde-3-phosphate (G3P). This is Triosephosphate isomerase from Coxiella burnetii (strain Dugway 5J108-111).